The primary structure comprises 406 residues: Tyrosine--tRNA ligase (406 aa).

Residue tyrosine 35 coordinates L-tyrosine. A 'HIGH' region motif is present at residues 40 to 49; the sequence is ATSTSLHIGH. Residues tyrosine 166 and glutamine 170 each contribute to the L-tyrosine site. Residues 226–230 carry the 'KMSKS' region motif; sequence KMGKS. Lysine 229 lines the ATP pocket. The 65-residue stretch at 341-405 folds into the S4 RNA-binding domain; that stretch reads ILLIDLMVLS…IGKKRILRVI (65 aa).

This sequence belongs to the class-I aminoacyl-tRNA synthetase family. TyrS type 1 subfamily. As to quaternary structure, homodimer.

The protein resides in the cytoplasm. The enzyme catalyses tRNA(Tyr) + L-tyrosine + ATP = L-tyrosyl-tRNA(Tyr) + AMP + diphosphate + H(+). In terms of biological role, catalyzes the attachment of tyrosine to tRNA(Tyr) in a two-step reaction: tyrosine is first activated by ATP to form Tyr-AMP and then transferred to the acceptor end of tRNA(Tyr). This Borrelia turicatae (strain 91E135) protein is Tyrosine--tRNA ligase.